Consider the following 93-residue polypeptide: Small ribosomal subunit protein uS19 (93 aa).

Belongs to the universal ribosomal protein uS19 family.

Protein S19 forms a complex with S13 that binds strongly to the 16S ribosomal RNA. This is Small ribosomal subunit protein uS19 from Tropheryma whipplei (strain TW08/27) (Whipple's bacillus).